The primary structure comprises 186 residues: Ribosome-recycling factor (186 aa).

The tract at residues 135–164 is disordered; it reads DGMDDLKKAEKDGEIGQDESRAQSERVQKM.

The protein belongs to the RRF family.

The protein localises to the cytoplasm. Functionally, responsible for the release of ribosomes from messenger RNA at the termination of protein biosynthesis. May increase the efficiency of translation by recycling ribosomes from one round of translation to another. In Sinorhizobium medicae (strain WSM419) (Ensifer medicae), this protein is Ribosome-recycling factor.